Here is a 251-residue protein sequence, read N- to C-terminus: Lactose phosphotransferase system repressor (251 aa).

The 56-residue stretch at lysine 3–serine 58 folds into the HTH deoR-type domain. Positions isoleucine 20 to aspartate 39 form a DNA-binding region, H-T-H motif.

Repressor of the lactose catabolism operon. Galactose-6-phosphate is the inducer. The chain is Lactose phosphotransferase system repressor (lacR) from Staphylococcus aureus (strain N315).